Consider the following 59-residue polypeptide: U-actitoxin-Aer2b (59 aa).

Contains 5 disulfide bonds.

It is found in the secreted. The protein resides in the nematocyst. The protein is U-actitoxin-Aer2b of Anemonia erythraea (Sea anemone).